The sequence spans 395 residues: Multidrug resistance protein MdtL (395 aa).

Transmembrane regions (helical) follow at residues 4-24 (FLLC…MYLV), 42-62 (IAFS…GKIA), 69-89 (PVAI…SRAS), 93-113 (LFLS…VVAF), 131-151 (LLNG…HLIM), 158-178 (SLFY…LFIL), 217-237 (VSVI…VMGF), 247-267 (ALTA…LGLF), 271-291 (TLML…SLAH), 295-315 (VTLF…GVAM), 328-350 (VASS…LAAI), and 355-377 (AMNM…IFSV).

Belongs to the major facilitator superfamily. DHA1 family. MdtL (TC 2.A.1.2.22) subfamily.

It localises to the cell inner membrane. The chain is Multidrug resistance protein MdtL from Salmonella dublin (strain CT_02021853).